Here is a 119-residue protein sequence, read N- to C-terminus: HTH-type transcriptional regulator SarX (119 aa).

Residues 55 to 78 (LKTAMDELDLSRTKLLVSIRRLIE) constitute a DNA-binding region (H-T-H motif).

Belongs to the SarA family.

Its subcellular location is the cytoplasm. Functionally, involved in the regulation of virulence genes. Acts as a repressor of the agr locus and consequently targets genes regulated by the agr system such as sspA, hla and hlb. Binds directly to the agr promoter region. The sequence is that of HTH-type transcriptional regulator SarX (sarX) from Staphylococcus aureus (strain USA300).